Consider the following 153-residue polypeptide: Large ribosomal subunit protein eL15 (153 aa).

Lys-32 is covalently cross-linked (Glycyl lysine isopeptide (Lys-Gly) (interchain with G-Cter in SUMO2)). Residues Ser-46 and Ser-49 each carry the phosphoserine modification. The segment at 114–135 (TSAGRKSRGLGKGHKFHHTIGG) is disordered. The segment covering 118–131 (RKSRGLGKGHKFHH) has biased composition (basic residues).

This sequence belongs to the eukaryotic ribosomal protein eL15 family. Component of the large ribosomal subunit. Interacts with IFIT1 (via TPR repeats 1-4).

The protein resides in the cytoplasm. Its function is as follows. Component of the large ribosomal subunit. The ribosome is a large ribonucleoprotein complex responsible for the synthesis of proteins in the cell. The sequence is that of Large ribosomal subunit protein eL15 (RPL15) from Sus scrofa (Pig).